We begin with the raw amino-acid sequence, 541 residues long: 2-isopropylmalate synthase (541 aa).

In terms of domain architecture, Pyruvate carboxyltransferase spans 8–284 (VIIFDTTLRD…LTNINTRHIY (277 aa)). Mn(2+) is bound by residues aspartate 17, histidine 208, histidine 210, and asparagine 244. Residues 408 to 541 (RLELVQVSCG…DQPTEVVAGS (134 aa)) form a regulatory domain region.

The protein belongs to the alpha-IPM synthase/homocitrate synthase family. LeuA type 1 subfamily. Homodimer. The cofactor is Mn(2+).

Its subcellular location is the cytoplasm. The catalysed reaction is 3-methyl-2-oxobutanoate + acetyl-CoA + H2O = (2S)-2-isopropylmalate + CoA + H(+). Its pathway is amino-acid biosynthesis; L-leucine biosynthesis; L-leucine from 3-methyl-2-oxobutanoate: step 1/4. Functionally, catalyzes the condensation of the acetyl group of acetyl-CoA with 3-methyl-2-oxobutanoate (2-ketoisovalerate) to form 3-carboxy-3-hydroxy-4-methylpentanoate (2-isopropylmalate). The chain is 2-isopropylmalate synthase from Trichodesmium erythraeum (strain IMS101).